Here is a 395-residue protein sequence, read N- to C-terminus: Membrane glycoprotein spo14 (395 aa).

The Cytoplasmic segment spans residues 1 to 346; that stretch reads MAELHLSFPA…KLEDAGVILR (346 aa). WD repeat units follow at residues 250–285 and 290–326; these read MIRD…RFMS and KLSQ…CLQF. The helical; Signal-anchor for type II membrane protein transmembrane segment at 347–367 threads the bilayer; sequence LSLMFPFVLAILYFYLQLLFP. The Lumenal portion of the chain corresponds to 368 to 395; that stretch reads DEKLDAIHRFFSFILHIFSKYTIRNYDL.

The protein resides in the endoplasmic reticulum membrane. The protein localises to the golgi apparatus. It localises to the cis-Golgi network membrane. Its function is as follows. Required for the formation of transport vesicles from the ER. This function involves the cytoplasmic domain of the protein, which is thought to interact with the small GTP-binding protein sar1. The chain is Membrane glycoprotein spo14 (spo14) from Schizosaccharomyces pombe (strain 972 / ATCC 24843) (Fission yeast).